We begin with the raw amino-acid sequence, 326 residues long: Transcription factor MYB16 (326 aa).

HTH myb-type domains lie at 9 to 61 (KLGL…TNYL) and 62 to 116 (RPDI…KKRL). 2 consecutive DNA-binding regions (H-T-H motif) follow at residues 37-61 (WRSLPEKAGLHRCGKSCRLRWTNYL) and 89-112 (WSAIATHLPKRTDNEIKNYWNTHL). 2 disordered regions span residues 197–217 (NWTTKPHEDQQQLESPTSTVS) and 280–299 (DRSFSGDKNETAGESSGGDC). A compositionally biased stretch (polar residues) spans 208–217 (QLESPTSTVS). Residues 280–290 (DRSFSGDKNET) are compositionally biased toward basic and acidic residues.

As to expression, expressed in trichomes, epidermis and mesophyll cells of young leaves, stems, petals, sepals, carpels and stamens.

The protein localises to the nucleus. Its function is as follows. Involved in the control of epidermal cell morphogenesis in petals. Promotes unidirectional cell expansion once outgrowth has been initiated. Coordinately with WIN1/SHN1, participates in the regulation of cuticle biosynthesis and wax accumulation in reproductive organs and trichomes. Functions in cuticle nanoridge formation in petals and stamens, and in morphogenesis of petal conical cells and trichomes. Functions as a major regulator of cuticle formation in vegetative organs by regulating the cuticle biosynthesis genes CYP86A8/LCR and CER1. The chain is Transcription factor MYB16 from Arabidopsis thaliana (Mouse-ear cress).